Reading from the N-terminus, the 157-residue chain is Transmembrane protein 50A (157 aa).

Residue Ser-2 is modified to N-acetylserine. Phosphoserine is present on Ser-2. The next 4 helical transmembrane spans lie at 26 to 46 (IAAG…AVIY), 58 to 78 (ACGV…NGQV), 95 to 115 (IWLF…MWIL), and 126 to 146 (IVYP…GGLV).

The protein belongs to the UPF0220 family.

Its subcellular location is the membrane. The protein is Transmembrane protein 50A (TMEM50A) of Homo sapiens (Human).